A 455-amino-acid chain; its full sequence is Carbamoyl phosphate synthase arginine-specific small chain (455 aa).

Residues 1–28 (MFARFCKAIPAKGRAFPSVNASIQSRLM) constitute a mitochondrion transit peptide. A Glutamine amidotransferase type-1 domain is found at 219 to 406 (HVAVIDCGVK…IDSVRKYKAN (188 aa)). Cys-295 functions as the Nucleophile in the catalytic mechanism. Active-site residues include His-379 and Glu-381.

Belongs to the CarA family. Heterodimer composed of 2 chains; the small (or glutamine) chain promotes the hydrolysis of glutamine to ammonia, which is used by the large (or ammonia) chain to synthesize carbamoyl phosphate.

It localises to the mitochondrion matrix. It catalyses the reaction hydrogencarbonate + L-glutamine + 2 ATP + H2O = carbamoyl phosphate + L-glutamate + 2 ADP + phosphate + 2 H(+). It carries out the reaction L-glutamine + H2O = L-glutamate + NH4(+). Its pathway is amino-acid biosynthesis; L-arginine biosynthesis; carbamoyl phosphate from bicarbonate: step 1/1. Its function is as follows. Small subunit of the arginine-specific carbamoyl phosphate synthase (CPSase). CPSase catalyzes the formation of carbamoyl phosphate from the ammonia moiety of glutamine, carbonate, and phosphate donated by ATP, the first step of the arginine biosynthetic pathway. The small subunit (glutamine amidotransferase) binds and cleaves glutamine to supply the large subunit with the substrate ammonia. This Aspergillus clavatus (strain ATCC 1007 / CBS 513.65 / DSM 816 / NCTC 3887 / NRRL 1 / QM 1276 / 107) protein is Carbamoyl phosphate synthase arginine-specific small chain (cpa1).